A 63-amino-acid chain; its full sequence is Large ribosomal subunit protein bL35 (63 aa).

The tract at residues 26 to 50 (GSGMRHNLEHKSARKRRALKRDDVL) is disordered.

Belongs to the bacterial ribosomal protein bL35 family.

This is Large ribosomal subunit protein bL35 from Bifidobacterium animalis subsp. lactis (strain AD011).